We begin with the raw amino-acid sequence, 247 residues long: UPF0612 protein P20C8.01c (247 aa).

2 coiled-coil regions span residues 27–63 (IKRYERSVDSTLLEIDENKREALEKYIEERDRKMKYE) and 138–225 (DTVQ…DARS).

This sequence belongs to the UPF0612 family.

Its subcellular location is the cytoplasm. The polypeptide is UPF0612 protein P20C8.01c (Schizosaccharomyces pombe (strain 972 / ATCC 24843) (Fission yeast)).